Consider the following 207-residue polypeptide: Putative 3-methyladenine DNA glycosylase (207 aa).

The protein belongs to the DNA glycosylase MPG family.

The chain is Putative 3-methyladenine DNA glycosylase from Burkholderia lata (strain ATCC 17760 / DSM 23089 / LMG 22485 / NCIMB 9086 / R18194 / 383).